We begin with the raw amino-acid sequence, 312 residues long: Protein lon-1 (312 aa).

The N-terminal stretch at 1–18 (MNYLLTALIALLAPISVA) is a signal peptide. Positions 87–209 (EHNRYRRMVP…GHRNVFVCHY (123 aa)) constitute an SCP domain. Asn-142 is a glycosylation site (N-linked (GlcNAc...) asparagine). Residues 265–284 (TTTTESTTTSTTTEEPTTTC) are compositionally biased toward low complexity. The interval 265–312 (TTTTESTTTSTTTEEPTTTCEPDEPEAEGADNNQEEEEENNDGFRMRV) is disordered. Over residues 285–305 (EPDEPEAEGADNNQEEEEENN) the composition is skewed to acidic residues.

It belongs to the CRISP family. As to expression, expressed in hypodermal tissues.

Functionally, regulates body size morphogenesis, but does not affect male tail development. The chain is Protein lon-1 (lon-1) from Caenorhabditis elegans.